Consider the following 291-residue polypeptide: Pantothenate synthetase (291 aa).

ATP is bound at residue 30-37; it reads MGALHAGH. Residue histidine 37 is the Proton donor of the active site. Residue glutamine 61 participates in (R)-pantoate binding. Glutamine 61 serves as a coordination point for beta-alanine. 147–150 contributes to the ATP binding site; it reads GQKD. Residue glutamine 153 participates in (R)-pantoate binding. ATP contacts are provided by residues valine 176 and 184–187; that span reads LSSR.

Belongs to the pantothenate synthetase family. As to quaternary structure, homodimer.

The protein resides in the cytoplasm. It carries out the reaction (R)-pantoate + beta-alanine + ATP = (R)-pantothenate + AMP + diphosphate + H(+). It participates in cofactor biosynthesis; (R)-pantothenate biosynthesis; (R)-pantothenate from (R)-pantoate and beta-alanine: step 1/1. Catalyzes the condensation of pantoate with beta-alanine in an ATP-dependent reaction via a pantoyl-adenylate intermediate. This is Pantothenate synthetase from Koribacter versatilis (strain Ellin345).